The sequence spans 443 residues: D(2) dopamine receptor (443 aa).

Over 1 to 37 the chain is Extracellular; it reads MDPLNLSWYDDDLERQNWSRPFNGSDGKADRPHYNYY. 3 N-linked (GlcNAc...) asparagine glycosylation sites follow: N5, N17, and N23. Residues 38 to 60 form a helical membrane-spanning segment; that stretch reads ATLLTLLIAVIVFGNVLVCMAVS. The Cytoplasmic portion of the chain corresponds to 61 to 70; it reads REKALQTTTN. Residues 71–93 form a helical membrane-spanning segment; it reads YLIVSLAVADLLVATLVMPWVVY. The Extracellular segment spans residues 94 to 108; the sequence is LEVVGEWKFSKIHCD. Residues C107 and C182 are joined by a disulfide bond. Residues 109–130 traverse the membrane as a helical segment; that stretch reads IFVTLDVMMCTASILNLCAISI. Residues 131 to 151 lie on the Cytoplasmic side of the membrane; it reads DRYTAVAMPMLYNTRYSSKRR. A helical transmembrane segment spans residues 152 to 172; the sequence is VTVMIAIVWVLSFTISCPLLF. At 173-188 the chain is on the extracellular side; that stretch reads GLNNADQNECIIANPA. The chain crosses the membrane as a helical span at residues 189–213; sequence FVVYSSIVSFYVPFIVTLLVYIKIY. The interaction with PPP1R9B stretch occupies residues 211–373; sequence KIYIVLRRRR…SQQKEKKATQ (163 aa). Topologically, residues 214 to 373 are cytoplasmic; it reads IVLRRRRKRV…SQQKEKKATQ (160 aa). Positions 281 to 332 are disordered; the sequence is MEMLSSTSPPERTRYSPIPPSHHQLTLPDPSHHGLHSTPDSPAKPEKNGHAK. The chain crosses the membrane as a helical span at residues 374-395; that stretch reads MLAIVLGVFIICWLPFFITHIL. The Extracellular segment spans residues 396–409; sequence NIHCDCNIPPVLYS. An intrachain disulfide couples C399 to C401. Residues 410–431 traverse the membrane as a helical segment; that stretch reads AFTWLGYVNSAVNPIIYTTFNI. Over 432 to 443 the chain is Cytoplasmic; that stretch reads EFRKAFLKILHC. C443 is lipidated: S-palmitoyl cysteine.

This sequence belongs to the G-protein coupled receptor 1 family. As to quaternary structure, forms homo- and heterooligomers with DRD4. The interaction with DRD4 may modulate agonist-induced downstream signaling. Interacts with CADPS and CADPS2. Interacts with GPRASP1, PPP1R9B and CLIC6. Interacts with ARRB2. Interacts with HTR2A. Interacts with DRD1. Interacts with KCNA2. Post-translationally, palmitoylated. Palmitoylation which is required for proper localization to the plasma membrane and stability of the receptor could be carried on by ZDHHC4, ZDHHC3 and ZDHHC8.

The protein resides in the cell membrane. It localises to the golgi apparatus membrane. In terms of biological role, dopamine receptor whose activity is mediated by G proteins which inhibit adenylyl cyclase. Positively regulates postnatal regression of retinal hyaloid vessels via suppression of VEGFR2/KDR activity, downstream of OPN5. In Chlorocebus aethiops (Green monkey), this protein is D(2) dopamine receptor (DRD2).